Reading from the N-terminus, the 346-residue chain is MASAETPNPDAEIPNTDAAAAADPAAAAPAAAATDPAAAGSPSPPLPPRKRRLSPTPSPTRRSSRSRSRSPRRGRSRSRSRSRSRGRSASPRYPDGKRRRHNDLNVEVCRDFLRDRCARADIECKYAHPHPTVAVDRDSKVTACADSLRNNCFRGRTCRYYHPPPHIQESLLRSIGVEDPKVKMQVCRDFTRGRCSRSANECRFLHHSPLEDCAIVCQDFLRGRCDRKSCRYSHVMAHPMPPPMRDIPMQYPDMVYMPPPAPLGVPMMMPPPSAPAAFSGNNYGVEVCRDYLKNMCNRESCRFAHPDLNNEVMNTQVEVCRDFKRGECNRPACRFYHPPASSNSIG.

The tract at residues 1–99 is disordered; sequence MASAETPNPD…SPRYPDGKRR (99 aa). Low complexity predominate over residues 17–41; the sequence is DAAAAADPAAAAPAAAATDPAAAGS. Over residues 62 to 86 the composition is skewed to basic residues; that stretch reads RSSRSRSRSPRRGRSRSRSRSRSRG. 6 consecutive C3H1-type zinc fingers follow at residues 103–131, 138–165, 181–209, 211–237, 282–308, and 314–340; these read DLNV…HPHP, DSKV…HPPP, KVKM…HHSP, EDCA…HVMA, NYGV…HPDL, and NTQV…HPPA.

In Oryza sativa subsp. japonica (Rice), this protein is Zinc finger CCCH domain-containing protein 28.